The following is a 693-amino-acid chain: Sodium-dependent dopamine transporter (693 aa).

At 1 to 56 (MSEGRCSVAHMSSVVAPAKEANAMGPKAVELVLVKEQNGVQLTNSTLLNPPQSPTE) the chain is on the cytoplasmic side. Residues 57–95 (AQDRETWSKKADFLLSVIGFAVDLANVWRFPYLCYKNGG) form a discontinuously helical membrane-spanning segment. Na(+)-binding residues include Gly-75, Ala-77, Val-78, Asp-79, and Asn-82. Asp-79 serves as a coordination point for dopamine. A run of 2 helical transmembrane segments spans residues 96 to 127 (GAFL…NREG) and 128 to 171 (AAGV…LSSF). Ser-149 and Gly-153 together coordinate dopamine. Over 172–233 (TTELPWTHCN…SQGIDDLGPP (62 aa)) the chain is Extracellular. Cys-180 and Cys-189 form a disulfide bridge. Residues Asn-181, Asn-196, and Asn-202 are each glycosylated (N-linked (GlcNAc...) asparagine). The next 2 helical transmembrane spans lie at 234 to 253 (RWQL…FSLW) and 254 to 284 (KGVK…GITL). Over 285-303 (PGAVDAIRAYLSVDFHRLC) the chain is Extracellular. Residues 304–332 (EASVWIDAAIQICFSLGVGLGVLIAFSSY) traverse the membrane as a discontinuously helical segment. Gln-314 contributes to the chloride binding site. Phe-317 contributes to the dopamine binding site. Na(+)-binding residues include Ser-318 and Asn-350. A chloride-binding site is contributed by Ser-318. Residues 333–373 (NKFTNNCYRDAIITTSVNSLTSFSSGFVVFSFLGYMAQKHS) form a helical membrane-spanning segment. Ser-354 contributes to the chloride binding site. The Extracellular segment spans residues 374 to 397 (VPIGDVAKDGPGLIFIIYPEALAT). 3 consecutive transmembrane segments (helical) span residues 398-439 (LPLS…QLLH), 440-463 (RHRE…CVTN), and 464-496 (GGIY…AWFY). Na(+) contacts are provided by Leu-415, Asp-418, and Ser-419. Positions 419 and 420 each coordinate dopamine. The Cytoplasmic portion of the chain corresponds to 497–513 (GVWQFSDDIKQMTGRRP). A helical membrane pass occupies residues 514–539 (SLYWRLCWKFVSPCFLLFVVVVSIAT). Over 540-550 (FRPPHYGAYVF) the chain is Extracellular. Residues 551-580 (PEWATALGWAIAASSMSVVPIYAAYKLCSL) traverse the membrane as a helical segment. The tract at residues 558–587 (GWAIAASSMSVVPIYAAYKLCSLPGSSREK) is interaction with TGFB1I1. The Cytoplasmic segment spans residues 581–693 (PGSSREKLAY…VESTGLCSVY (113 aa)).

Belongs to the sodium:neurotransmitter symporter (SNF) (TC 2.A.22) family. SLC6A3 subfamily. Monomer. Homooligomer; disulfide-linked. Interacts with PRKCABP and TGFB1I1. Interacts (via N-terminus) with SYNGR3 (via N-terminus). Interacts with SLC18A2. Interacts with TOR1A (ATP-bound); TOR1A regulates SLC6A3 subcellular location. Interacts with alpha-synuclein/SNCA. Interacts with SEPTIN4. Expressed in the neurons of the substantia nigra of the brain.

Its subcellular location is the cell membrane. The protein localises to the cell projection. It is found in the neuron projection. It localises to the axon. It catalyses the reaction dopamine(out) + chloride(out) + Na(+)(out) = dopamine(in) + chloride(in) + Na(+)(in). It carries out the reaction (R)-noradrenaline(out) + chloride(out) + Na(+)(out) = (R)-noradrenaline(in) + chloride(in) + Na(+)(in). The enzyme catalyses dopamine(out) + chloride(out) + 2 Na(+)(out) = dopamine(in) + chloride(in) + 2 Na(+)(in). Its activity is regulated as follows. Inhibited by GBR 12909 dihydrochloride, amphetamine and cocaine. Inhibited by zinc ions. Its function is as follows. Mediates sodium- and chloride-dependent transport of dopamine. Also mediates sodium- and chloride-dependent transport of norepinephrine (also known as noradrenaline). Regulator of light-dependent retinal hyaloid vessel regression, downstream of OPN5 signaling. This is Sodium-dependent dopamine transporter (SLC6A3) from Bos taurus (Bovine).